Consider the following 376-residue polypeptide: DNA methyltransferase CcrM (376 aa).

An RAMA domain is found at Lys-273–Asn-370.

Belongs to the N(4)/N(6)-methyltransferase family.

It catalyses the reaction a 2'-deoxyadenosine in DNA + S-adenosyl-L-methionine = an N(6)-methyl-2'-deoxyadenosine in DNA + S-adenosyl-L-homocysteine + H(+). Its function is as follows. A beta subtype methylase that recognizes the double-stranded sequence 5'-GANTC-3' and methylates A-2 on both strands. Overexpression leads to many branched and bloated cells, two to three times the size of wild-type cells, and cells that have 1-3 times the normal amount of DNA. Contributes to the accurate cell-cycle control of DNA replication and cellular morphology. Can fully replace its ortholog in C.crescentus. In Rhizobium meliloti (strain 1021) (Ensifer meliloti), this protein is DNA methyltransferase CcrM (smeIM).